Consider the following 122-residue polypeptide: Large ribosomal subunit protein uL14 (122 aa).

It belongs to the universal ribosomal protein uL14 family. Part of the 50S ribosomal subunit. Forms a cluster with proteins L3 and L19. In the 70S ribosome, L14 and L19 interact and together make contacts with the 16S rRNA in bridges B5 and B8.

Its function is as follows. Binds to 23S rRNA. Forms part of two intersubunit bridges in the 70S ribosome. In Bacillus cytotoxicus (strain DSM 22905 / CIP 110041 / 391-98 / NVH 391-98), this protein is Large ribosomal subunit protein uL14.